The sequence spans 414 residues: Putative F-box/kelch-repeat protein At2g29800 (414 aa).

Residues 1–61 (MASISETSDD…EVENVPPIPR (61 aa)) form a disordered region. Residues 20–35 (KPEEPHKNPQEEKENQ) are compositionally biased toward basic and acidic residues. Acidic residues predominate over residues 40–54 (NEADEEDDHQDEEVE). In terms of domain architecture, F-box spans 58–105 (PIPRKIPPVLIENTIAPLRRCHYPKLSLLSNAFRQVISSEDLFQVRSL). Kelch repeat units lie at residues 163–211 (KIYV…VIDG), 212–258 (RIYV…IVHV), 263–302 (KIYI…SCVV), and 305–349 (LLYA…SKMA).

In Arabidopsis thaliana (Mouse-ear cress), this protein is Putative F-box/kelch-repeat protein At2g29800.